The following is a 280-amino-acid chain: Putative ABC transporter ATP-binding protein MTH_133 (280 aa).

The ABC transporter domain occupies 6 to 241 (IEAVDIRYTY…IDTIRGANLR (236 aa)). ATP is bound at residue 39–46 (GPNGAGKS).

The protein belongs to the ABC transporter superfamily.

The protein resides in the cell membrane. In terms of biological role, probably part of an ABC transporter complex. Responsible for energy coupling to the transport system. The protein is Putative ABC transporter ATP-binding protein MTH_133 of Methanothermobacter thermautotrophicus (strain ATCC 29096 / DSM 1053 / JCM 10044 / NBRC 100330 / Delta H) (Methanobacterium thermoautotrophicum).